A 400-amino-acid polypeptide reads, in one-letter code: MLCDRLWRNARLATLAEGAPGLGLVEDGLIAARDGRILYAGPARAAPAFAARETVDCEGRWITPGLIDCHTHLVHGGDRAAEFEARLAGASYEEIARAGGGIVSTVRATRAASEDALVGSALRRLDALIAEGVTAVEVKSGYGLSVASERASLRAARRLGESRDVTVTTTFLGAHALPPEEPDKDRYIAHVCTEMLPALAREGLADAVDAFCEGIAFSPAQTARVFEAARAAGLPVKLHADQLSDLGGAALAARFGALSADHLEYADEAGAAALARAGTVAVLLPGAFYFIRETRRPPVDLFRRHGTRMALATDCNPGTSPLTSLLLVLNMGATLFRLTVEECLAGVTREAARALGRLHEIGTLEAGKWCDLAVWDVERPAELVYRMGFNPLHARIRRGR.

Residues His70 and His72 each coordinate Fe(3+). The Zn(2+) site is built by His70 and His72. The 4-imidazolone-5-propanoate site is built by Arg79, Tyr142, and His175. Position 142 (Tyr142) interacts with N-formimidoyl-L-glutamate. His239 contributes to the Fe(3+) binding site. Zn(2+) is bound at residue His239. Position 242 (Gln242) interacts with 4-imidazolone-5-propanoate. A Fe(3+)-binding site is contributed by Asp314. Asp314 contributes to the Zn(2+) binding site. Residues Asn316 and Gly318 each contribute to the N-formimidoyl-L-glutamate site. A 4-imidazolone-5-propanoate-binding site is contributed by Thr319.

It belongs to the metallo-dependent hydrolases superfamily. HutI family. Zn(2+) serves as cofactor. It depends on Fe(3+) as a cofactor.

It localises to the cytoplasm. The catalysed reaction is 4-imidazolone-5-propanoate + H2O = N-formimidoyl-L-glutamate. It functions in the pathway amino-acid degradation; L-histidine degradation into L-glutamate; N-formimidoyl-L-glutamate from L-histidine: step 3/3. In terms of biological role, catalyzes the hydrolytic cleavage of the carbon-nitrogen bond in imidazolone-5-propanoate to yield N-formimidoyl-L-glutamate. It is the third step in the universal histidine degradation pathway. The polypeptide is Imidazolonepropionase (Methylobacterium sp. (strain 4-46)).